A 530-amino-acid chain; its full sequence is 3-oxo-5-alpha-steroid 4-dehydrogenase (530 aa).

33–62 (DVVVVGWGGAGASAAIEAREQGAEVLVIER) lines the FAD pocket. The helical transmembrane segment at 395–415 (AWQCLFGGLWAFQSMPALALM) threads the bilayer.

The protein belongs to the FAD-dependent oxidoreductase 2 family. FAD serves as cofactor.

The protein resides in the membrane. It carries out the reaction a 3-oxo-5alpha-steroid + A = a 3-oxo-Delta(4)-steroid + AH2. It catalyses the reaction 5alpha-androstan-3,17-dione + A = androst-4-ene-3,17-dione + AH2. The catalysed reaction is 5alpha-androst-1-ene-3,17-dione + A = androsta-1,4-diene-3,17-dione + AH2. Its activity is regulated as follows. Inhibition occurs with substrate concentrations above 25 uM. Functionally, involved in the degradation of steroids having an A:B ring fusion in a trans configuration. Catalyzes the elimination of hydrogens located at positions 4 and 5 and the introduction of double bonds into ring A. In Comamonas testosteroni (Pseudomonas testosteroni), this protein is 3-oxo-5-alpha-steroid 4-dehydrogenase.